An 86-amino-acid polypeptide reads, in one-letter code: Kappa-theraphotoxin-Cg1a 2 (86 aa).

A signal peptide spans 1-21 (MKVSVVITLAVLGVMFVWASA). A propeptide spanning residues 22-50 (AELEERGSDQRDSPAWLKSMERIFQSEER) is cleaved from the precursor. Disulfide bonds link cysteine 52/cysteine 66, cysteine 59/cysteine 71, and cysteine 65/cysteine 78. Phenylalanine 84 is subject to Phenylalanine amide.

Belongs to the neurotoxin 10 (Hwtx-1) family. 28 (Jztx-11) subfamily. Expressed by the venom gland.

The protein resides in the secreted. In terms of biological role, this toxin acts as a voltage-dependent gating-modifier. It inhibits the sodium conductance (IC(50)=124 nM) and slows the fast inactivation (EC(50)=1180 nM) of Nav1.5/SCN5A. It significantly shifts the activation to more depolarized voltages and decreases the deactivation of Nav1.5 currents upon extreme depolarization, but only slightly affects voltage-dependence of steady-state inactivation. In addition, this toxin causes an approximately five-fold decrease in the rate of recovery from inactivation and an approximately 1.9-fold reduction in the closed-state inactivation rate. This toxin integrates the functions of site 3 toxins (alpha-scorpion toxins) with site 4 toxins (beta-scorpion and spider toxins) by targeting multiple sites on Nav1.5. Also shows inhibition of voltage-gated potassium channels (5 uM completely inhibits Kv2.1/KCNB1, whereas 5 uM moderately inhibits Kv4.2/KCND2 Kv4.1/KCND1 channels). This is Kappa-theraphotoxin-Cg1a 2 from Chilobrachys guangxiensis (Chinese earth tiger tarantula).